The chain runs to 364 residues: Phospho-N-acetylmuramoyl-pentapeptide-transferase (364 aa).

10 consecutive transmembrane segments (helical) span residues 3 to 23 (AILF…RVAI), 51 to 71 (TMGG…AKLI), 80 to 100 (ALLL…DDFI), 116 to 136 (MIGL…SWLE), 154 to 174 (IGWI…IIAA), 185 to 205 (LDGL…FVNI), 229 to 249 (PLDL…FLWW), 256 to 276 (IFMG…LAIL), 281 to 301 (LLLI…MLQV), and 341 to 361 (FWII…AEWV).

It belongs to the glycosyltransferase 4 family. MraY subfamily. It depends on Mg(2+) as a cofactor.

It is found in the cell membrane. The catalysed reaction is UDP-N-acetyl-alpha-D-muramoyl-L-alanyl-gamma-D-glutamyl-meso-2,6-diaminopimeloyl-D-alanyl-D-alanine + di-trans,octa-cis-undecaprenyl phosphate = di-trans,octa-cis-undecaprenyl diphospho-N-acetyl-alpha-D-muramoyl-L-alanyl-D-glutamyl-meso-2,6-diaminopimeloyl-D-alanyl-D-alanine + UMP. It functions in the pathway cell wall biogenesis; peptidoglycan biosynthesis. Catalyzes the initial step of the lipid cycle reactions in the biosynthesis of the cell wall peptidoglycan: transfers peptidoglycan precursor phospho-MurNAc-pentapeptide from UDP-MurNAc-pentapeptide onto the lipid carrier undecaprenyl phosphate, yielding undecaprenyl-pyrophosphoryl-MurNAc-pentapeptide, known as lipid I. The polypeptide is Phospho-N-acetylmuramoyl-pentapeptide-transferase (Nocardioides sp. (strain ATCC BAA-499 / JS614)).